The chain runs to 617 residues: Zinc metalloproteinase nas-36 (617 aa).

Residues 1-22 (MRLCHSIILFNSLISISICSKA) form the signal peptide. Residues 23-126 (DDPALLVASE…SKDKTKRLRR (104 aa)) constitute a propeptide that is removed on maturation. The Peptidase M12A domain maps to 127-322 (SFVSDKTATW…VATINTAYCK (196 aa)). 9 disulfide bridges follow: Cys-169-Cys-321, Cys-192-Cys-211, Cys-325-Cys-346, Cys-348-Cys-357, Cys-368-Cys-397, Cys-425-Cys-445, Cys-519-Cys-550, Cys-523-Cys-555, and Cys-535-Cys-540. N-linked (GlcNAc...) asparagine glycosylation is present at Asn-174. His-219 contacts Zn(2+). Glu-220 is an active-site residue. Residues His-223 and His-229 each coordinate Zn(2+). The 42-residue stretch at 317–358 (NTAYCKDECKSEKTKCENGGYMRPSKCSECLCPDGLGGEKCE) folds into the EGF-like domain. The region spanning 368–482 (CGGIIKLTEE…IGFKIQAKST (115 aa)) is the CUB domain. The 50-residue stretch at 507 to 556 (PNVWADWGEWSMCSRTCGGCGIRSRVRSCRSKKCEGRRQEFGTCNLKACP) folds into the TSP type-1 domain.

Zn(2+) is required as a cofactor. As to expression, expressed in hypodermal cells. Also detected in the hypodermal seam cells in L4 larvae and young adults. In old adult hermaphrodites, it localizes to the vulva (at protein level).

It localises to the secreted. In terms of biological role, metalloprotease. Involved in molting, a process during larval stages in which a new cuticle is formed and the old cuticle is shed. In Caenorhabditis elegans, this protein is Zinc metalloproteinase nas-36 (nas-36).